Here is a 94-residue protein sequence, read N- to C-terminus: uncharacterized protein (94 aa).

In terms of tissue distribution, specifically expressed in retina and retinal pigment epithelium.

This is an uncharacterized protein from Homo sapiens (Human).